The chain runs to 251 residues: Triosephosphate isomerase (251 aa).

Substrate is bound at residue 8–10; the sequence is NWK. His97 functions as the Electrophile in the catalytic mechanism. Catalysis depends on Glu170, which acts as the Proton acceptor. Substrate-binding positions include Gly176, Ser215, and 236–237; that span reads GG.

The protein belongs to the triosephosphate isomerase family. As to quaternary structure, homodimer.

The protein resides in the cytoplasm. The catalysed reaction is D-glyceraldehyde 3-phosphate = dihydroxyacetone phosphate. Its pathway is carbohydrate biosynthesis; gluconeogenesis. It functions in the pathway carbohydrate degradation; glycolysis; D-glyceraldehyde 3-phosphate from glycerone phosphate: step 1/1. Involved in the gluconeogenesis. Catalyzes stereospecifically the conversion of dihydroxyacetone phosphate (DHAP) to D-glyceraldehyde-3-phosphate (G3P). The chain is Triosephosphate isomerase from Nitratidesulfovibrio vulgaris (strain ATCC 29579 / DSM 644 / CCUG 34227 / NCIMB 8303 / VKM B-1760 / Hildenborough) (Desulfovibrio vulgaris).